The chain runs to 284 residues: Aliphatic sulfonates import ATP-binding protein SsuB (284 aa).

The ABC transporter domain occupies 21–242; it reads LRIAHAVKRY…HRGAPAFARL (222 aa). Position 53–60 (53–60) interacts with ATP; sequence GRSGCGKS.

The protein belongs to the ABC transporter superfamily. Aliphatic sulfonates importer (TC 3.A.1.17.2) family. The complex is composed of two ATP-binding proteins (SsuB), two transmembrane proteins (SsuC) and a solute-binding protein (SsuA).

Its subcellular location is the cell inner membrane. It carries out the reaction ATP + H2O + aliphatic sulfonate-[sulfonate-binding protein]Side 1 = ADP + phosphate + aliphatic sulfonateSide 2 + [sulfonate-binding protein]Side 1.. Functionally, part of the ABC transporter complex SsuABC involved in aliphatic sulfonates import. Responsible for energy coupling to the transport system. In Ralstonia nicotianae (strain ATCC BAA-1114 / GMI1000) (Ralstonia solanacearum), this protein is Aliphatic sulfonates import ATP-binding protein SsuB.